The primary structure comprises 120 residues: Aspartate 1-decarboxylase (120 aa).

The active-site Schiff-base intermediate with substrate; via pyruvic acid is the Ser25. Ser25 bears the Pyruvic acid (Ser) mark. Thr57 is a substrate binding site. Tyr58 functions as the Proton donor in the catalytic mechanism. Residue 72-74 participates in substrate binding; it reads GAA.

It belongs to the PanD family. Heterooctamer of four alpha and four beta subunits. Pyruvate serves as cofactor. Is synthesized initially as an inactive proenzyme, which is activated by self-cleavage at a specific serine bond to produce a beta-subunit with a hydroxyl group at its C-terminus and an alpha-subunit with a pyruvoyl group at its N-terminus.

Its subcellular location is the cytoplasm. The enzyme catalyses L-aspartate + H(+) = beta-alanine + CO2. Its pathway is cofactor biosynthesis; (R)-pantothenate biosynthesis; beta-alanine from L-aspartate: step 1/1. Functionally, catalyzes the pyruvoyl-dependent decarboxylation of aspartate to produce beta-alanine. This Helicobacter hepaticus (strain ATCC 51449 / 3B1) protein is Aspartate 1-decarboxylase.